The sequence spans 243 residues: Venom nerve growth factor 1 (243 aa).

The N-terminal stretch at Met-1–Ala-18 is a signal peptide. A propeptide spanning residues Ala-19–Arg-125 is cleaved from the precursor. A compositionally biased stretch (basic and acidic residues) spans Gly-47 to Asp-66. Positions Gly-47–Leu-69 are disordered. 3 disulfide bridges follow: Cys-139/Cys-204, Cys-182/Cys-232, and Cys-192/Cys-234. The N-linked (GlcNAc...) asparagine glycan is linked to Asn-148.

Belongs to the NGF-beta family. As to quaternary structure, homodimer; non-covalently linked. In terms of tissue distribution, expressed by the venom gland.

The protein resides in the secreted. Its function is as follows. Nerve growth factor is important for the development and maintenance of the sympathetic and sensory nervous systems. It stimulates division and differentiation of sympathetic and embryonic sensory neurons as well as basal forebrain cholinergic neurons in the brain. Its relevance in the snake venom is not clear. However, it has been shown to inhibit metalloproteinase-dependent proteolysis of platelet glycoprotein Ib alpha, suggesting a metalloproteinase inhibition to prevent metalloprotease autodigestion and/or protection against prey proteases. Binds a lipid between the two protein chains in the homodimer. The lipid-bound form promotes histamine relase from mouse mast cells, contrary to the lipid-free form. The protein is Venom nerve growth factor 1 of Oxyuranus microlepidotus (Inland taipan).